The primary structure comprises 361 residues: Rho-GTPase-activating protein 5 (361 aa).

Positions 52 to 245 constitute a Rho-GAP domain; that stretch reads IFLTRRDGEK…FLINHQGSFI (194 aa). Low complexity predominate over residues 306 to 323; the sequence is SSATYSNSPSSNFSNMKS. Residues 306–345 form a disordered region; sequence SSATYSNSPSSNFSNMKSSEVDPGSPPRIKSRSYSLSRSS.

It localises to the membrane. Its function is as follows. GTPase-activating protein for Rho1. Has a role in the negative regulation of (1-3)beta-D-glucan synthase activity and cell integrity. This is Rho-GTPase-activating protein 5 (rga5) from Schizosaccharomyces pombe (strain 972 / ATCC 24843) (Fission yeast).